The chain runs to 227 residues: Pyridoxine/pyridoxamine 5'-phosphate oxidase (227 aa).

Substrate contacts are provided by residues 23-26 (RREY) and K81. FMN-binding positions include 76 to 81 (RIVLLK), 91 to 92 (YT), R97, K98, and Q120. The substrate site is built by Y138, R142, and S146. Residues 155–156 (QS) and W200 each bind FMN. 206 to 208 (RLH) contacts substrate. Residue R210 participates in FMN binding.

The protein belongs to the pyridoxamine 5'-phosphate oxidase family. Homodimer. The cofactor is FMN.

It carries out the reaction pyridoxamine 5'-phosphate + O2 + H2O = pyridoxal 5'-phosphate + H2O2 + NH4(+). The enzyme catalyses pyridoxine 5'-phosphate + O2 = pyridoxal 5'-phosphate + H2O2. It participates in cofactor metabolism; pyridoxal 5'-phosphate salvage; pyridoxal 5'-phosphate from pyridoxamine 5'-phosphate: step 1/1. The protein operates within cofactor metabolism; pyridoxal 5'-phosphate salvage; pyridoxal 5'-phosphate from pyridoxine 5'-phosphate: step 1/1. Catalyzes the oxidation of either pyridoxine 5'-phosphate (PNP) or pyridoxamine 5'-phosphate (PMP) into pyridoxal 5'-phosphate (PLP). This is Pyridoxine/pyridoxamine 5'-phosphate oxidase from Pectobacterium atrosepticum (strain SCRI 1043 / ATCC BAA-672) (Erwinia carotovora subsp. atroseptica).